Consider the following 873-residue polypeptide: F-box only protein 41 (873 aa).

The segment covering 85–97 (ESTSFQGKEQATG) has biased composition (polar residues). 3 disordered regions span residues 85 to 110 (ESTS…HHHH), 163 to 193 (SSAC…SPAD), and 345 to 540 (SSSC…PSRS). The segment covering 168–178 (TPPPGPGPGPC) has biased composition (pro residues). Over residues 179–192 (SGPSSASPASPSPA) the composition is skewed to low complexity. Residues 207–349 (ALEKLEVDRR…QLQVISSSCG (143 aa)) adopt a coiled-coil conformation. Residues 357-371 (GRGGGGSASGPGVRG) are compositionally biased toward gly residues. Arg358 is subject to Omega-N-methylarginine. Composition is skewed to polar residues over residues 384–414 (VPST…SSGC) and 442–456 (AQAT…QAPR). Ser476 is modified (phosphoserine). Phosphothreonine is present on Thr477. The F-box domain occupies 548–592 (ILKMRAALFCIFTYLDTRTLLHAAEVCRDWRFVARHPAVWTRVLL). Ser760 carries the phosphoserine modification.

Directly interacts with SKP1 and CUL1.

Functionally, substrate-recognition component of the SCF (SKP1-CUL1-F-box protein)-type E3 ubiquitin ligase complex. This chain is F-box only protein 41 (Fbxo41), found in Mus musculus (Mouse).